Reading from the N-terminus, the 598-residue chain is Arginine--tRNA ligase (598 aa).

The short motif at 139 to 149 (ANPTGPMHVGH) is the 'HIGH' region element.

The protein belongs to the class-I aminoacyl-tRNA synthetase family. In terms of assembly, monomer.

The protein resides in the cytoplasm. It carries out the reaction tRNA(Arg) + L-arginine + ATP = L-arginyl-tRNA(Arg) + AMP + diphosphate. This Bradyrhizobium sp. (strain ORS 278) protein is Arginine--tRNA ligase.